Consider the following 89-residue polypeptide: Small ribosomal subunit protein uS15 (89 aa).

Belongs to the universal ribosomal protein uS15 family. Part of the 30S ribosomal subunit. Forms a bridge to the 50S subunit in the 70S ribosome, contacting the 23S rRNA.

One of the primary rRNA binding proteins, it binds directly to 16S rRNA where it helps nucleate assembly of the platform of the 30S subunit by binding and bridging several RNA helices of the 16S rRNA. In terms of biological role, forms an intersubunit bridge (bridge B4) with the 23S rRNA of the 50S subunit in the ribosome. The chain is Small ribosomal subunit protein uS15 from Methylorubrum extorquens (strain CM4 / NCIMB 13688) (Methylobacterium extorquens).